Reading from the N-terminus, the 1242-residue chain is MEPLRPQITYGPIEAVNNEELTEADMLSFISAAVNSTGLIGYNIKSFDDLMDNGIPQIVKQMFNVDITYKDQRDHTEIDKLRESVQIQFNFTDVNIERPQHRNYSQGNKINLLPNKARLCGLSYSGPVNLAAEVILTAHYSNGRQEVKRASIPPFQVSTFPIMRGSNRCHTYHLSKTAKKEIGEDPNEPGGYFIARGGEWVVDLLENIRFNTLHIHYHTMQQGNNEIIRGEFISQPGGAFENSSQIIIRYMTTGAITIEINSTKFSKLRIPWYLIFRMFGMTGDDSIIEQVVFDLESNSPVNTFMIEILEKSIHVSDPIFQPVQHELNREKIIQFLSEKVSKFVSNPSAYKSDENAVQYLNERQLTILDKILLPHMGQTADTRVRKLRFLGLLIHKILLVIMNVFPPTDRDSYRTKRVHGSGVSLAKAFKAIFNTSVIAPIINGFKELLKQTAFEDLTQRNIIEAFSAALSKNSASDLNRSMEQSIISGNKTIMVRQRPIVNRVSTQSLERKNLLNTISALRTVNTHSTTNASKQTERADMMRRVHASYPGYICVAQSADTGEKVGMSKQLAITANVCTAGEVLSLKQRLLSDPAIQQLADVSNKDIVRKGLARVFINGEWIGCCTNAFELAQRYRMLRREGKIVHPHTTIYWDSMVDEVEFWLDVGRLTRPLLIVDNNIEKYNKACYKAAEARKKGDKDWEKHKIPFIQNTRFTSQMAKDILAGTLTLEDLVAQGICEFITPEEAENCLVAFSITELRKHKHDVTRRFTHVDVPQAILGLAALVSPYANCTQPARVTYETNQGRQTGGWYCFSWPYRVDMNRFFQFYNEMPLVKTIAHNYVIPNGLNTIVAYMIYGGYNQEDSVIVSQSFIDRGGFAGTFYREEKVELESDIESFGKPDPLITKNLKPGANYEKLVDGFVPVGTVVKKGDIIIGKVAKIRGEKDELNKYIDRSVMYGFDEPAVVDAVMRPHGPNDEIFGLMRLRYERNLNIGDKMSSRSGNKGIAALALPTSDMPFTEDGLQPDLIVNPHSHPSRMTNGQMIETTVGLANALQGVVTDGTAFLPINVQLLSERLAQEGLRFNGCQKMFNGQTGEYFDAAIFIGPTYHQRLQKFVLDDRYAVASYGPTDALTGQPLDGKRSHGGLRLGEMEHWVLTAQGAMQTIIEKSHDDSDGCISYICRNCGEPAIYNASHPIYKCMNCDVQADISMVDSRRSSIVFQHEMRAANVNITSVLSPRVFQPA.

The C4-type zinc-finger motif lies at 1180 to 1201 (CRNCGEPAIYNASHPIYKCMNC).

It belongs to the RNA polymerase beta chain family. Part of the viral DNA-directed RNA polymerase that consists of 8 polII-like subunits (RPB1, RPB2, RPB3, RPB5, RPB6, RPB7, RPB9, RPB10), a capping enzyme and a termination factor.

The protein localises to the host cytoplasm. It localises to the virion. The catalysed reaction is RNA(n) + a ribonucleoside 5'-triphosphate = RNA(n+1) + diphosphate. Its function is as follows. Catalytic component of the DNA-directed RNA polymerase (RNAP) that catalyzes the transcription in the cytoplasm of viral DNA into RNA using the four ribonucleoside triphosphates as substrates. Forms the polymerase active center together with RPB1. Part of the core element with the central large cleft, the clamp element that moves to open and close the cleft and the jaws that are thought to grab the incoming DNA template. The polypeptide is DNA-directed RNA polymerase RPB2 homolog (African swine fever virus (isolate Tick/Malawi/Lil 20-1/1983) (ASFV)).